Here is a 443-residue protein sequence, read N- to C-terminus: ATP-dependent protease ATPase subunit HslU (443 aa).

ATP-binding positions include Ile-18, 60–65 (GVGKTE), Asp-256, Glu-321, and Arg-393.

It belongs to the ClpX chaperone family. HslU subfamily. As to quaternary structure, a double ring-shaped homohexamer of HslV is capped on each side by a ring-shaped HslU homohexamer. The assembly of the HslU/HslV complex is dependent on binding of ATP.

Its subcellular location is the cytoplasm. Its function is as follows. ATPase subunit of a proteasome-like degradation complex; this subunit has chaperone activity. The binding of ATP and its subsequent hydrolysis by HslU are essential for unfolding of protein substrates subsequently hydrolyzed by HslV. HslU recognizes the N-terminal part of its protein substrates and unfolds these before they are guided to HslV for hydrolysis. This is ATP-dependent protease ATPase subunit HslU from Vibrio parahaemolyticus serotype O3:K6 (strain RIMD 2210633).